The sequence spans 218 residues: Putative inactive cathepsin L-like protein CTSL3P (218 aa).

Disordered regions lie at residues 144-173 and 195-218; these read GDWK…EVAQ and GDED…EAQV. Residues 201 to 212 show a composition bias toward basic and acidic residues; the sequence is EDKWPHDMRNHL.

It belongs to the peptidase C1 family.

The protein is Putative inactive cathepsin L-like protein CTSL3P (CTSL3P) of Homo sapiens (Human).